Here is a 446-residue protein sequence, read N- to C-terminus: Delta(8)-fatty-acid desaturase (446 aa).

Residues 5-89 (KKYISVGELE…LEDYLVSEIS (85 aa)) enclose the Cytochrome b5 heme-binding domain. His40 and His63 together coordinate heme. Transmembrane regions (helical) follow at residues 112–132 (VIYC…GVLC) and 136–156 (LWVH…AAYL). A Histidine box-1 motif is present at residues 158-162 (HDSGH). The next 4 membrane-spanning stretches (helical) occupy residues 174-195 (FAQV…KWTH), 253-273 (IYLV…LLLF), 282-302 (ALNI…VSCL), and 309-329 (VLFV…FTLN). The Histidine box-2 signature appears at 195–199 (HNAHH). Positions 372-376 (QLEHH) match the Histidine box-3 motif.

Belongs to the fatty acid desaturase type 1 family. Requires Fe cation as cofactor. Expressed only in young leaves.

Its subcellular location is the membrane. It carries out the reaction an N-acyl-(4R)-4-hydroxysphinganine + 2 Fe(II)-[cytochrome b5] + O2 + 2 H(+) = a (4R,8E)-4-hydroxysphingenine ceramide + 2 Fe(III)-[cytochrome b5] + 2 H2O. The enzyme catalyses an N-acyl-(4R)-4-hydroxysphinganine + 2 Fe(II)-[cytochrome b5] + O2 + 2 H(+) = a (4R,8Z)-4-hydroxysphing-8-enine ceramide + 2 Fe(III)-[cytochrome b5] + 2 H2O. In terms of biological role, plays a major role as delta(8)-fatty-acid desaturase which introduces a double bond at the 8-position in the long-chain base (LCB) of ceramides with or without a hydroxy group at the 4-position. The enzyme produces both the 8E and 8Z isomers (in a 4:1 ratio). This structural modification contributes to the quantitative partitioning of ceramides between the two major sphingolipid classes, glucosylceramides and glycosylinositolphosphoryl ceramides. Sphingolipids are important membrane components involved in environmental stress responses, such as resistance to chilling, and act as cell signaling molecules. The polypeptide is Delta(8)-fatty-acid desaturase (sld1) (Borago officinalis (Bourrache)).